The primary structure comprises 95 residues: Aspartyl/glutamyl-tRNA(Asn/Gln) amidotransferase subunit C (95 aa).

Belongs to the GatC family. As to quaternary structure, heterotrimer of A, B and C subunits.

It carries out the reaction L-glutamyl-tRNA(Gln) + L-glutamine + ATP + H2O = L-glutaminyl-tRNA(Gln) + L-glutamate + ADP + phosphate + H(+). The enzyme catalyses L-aspartyl-tRNA(Asn) + L-glutamine + ATP + H2O = L-asparaginyl-tRNA(Asn) + L-glutamate + ADP + phosphate + 2 H(+). Allows the formation of correctly charged Asn-tRNA(Asn) or Gln-tRNA(Gln) through the transamidation of misacylated Asp-tRNA(Asn) or Glu-tRNA(Gln) in organisms which lack either or both of asparaginyl-tRNA or glutaminyl-tRNA synthetases. The reaction takes place in the presence of glutamine and ATP through an activated phospho-Asp-tRNA(Asn) or phospho-Glu-tRNA(Gln). The protein is Aspartyl/glutamyl-tRNA(Asn/Gln) amidotransferase subunit C of Pseudomonas syringae pv. syringae (strain B728a).